The primary structure comprises 570 residues: AT-rich interactive domain-containing protein 3A (570 aa).

A disordered region spans residues 102 to 215 (AGVPNSSSGH…LAPQAQSQHH (114 aa)). Positions 120–160 (DIDDEDDEDDDPELDRGMDDEERDMDEDDSMNEGGGDEDLE) are enriched in acidic residues. The residue at position 179 (S179) is a Phosphoserine. Residues 232 to 324 (DEKRKEFLDD…YLYPYECEKR (93 aa)) enclose the ARID domain. S356 bears the Phosphoserine mark. The REKLES domain maps to 429–523 (AALEQLREKL…GVLFARKPAI (95 aa)). The interval 430-473 (ALEQLREKLESGEPPEKKVMLMAEEQQRIMQHALQQNLFAMATQ) is important for nuclear localization. The tract at residues 475–495 (PMNIKLNNRDDRQETALNLST) is homodimerization. An important for cytoplasmic localization region spans residues 519-531 (RKPAIGFMPSSQR). Residues 528–570 (SSQRVHHQHSSQGKSNSPGLSSHIQPSSSASSSASSHGPATSP) form a disordered region. A phosphoserine mark is found at S542 and S569. Over residues 548–570 (SSHIQPSSSASSSASSHGPATSP) the composition is skewed to low complexity.

As to quaternary structure, homodimer.

The protein resides in the nucleus. It localises to the cytoplasm. Transcription factor. The sequence is that of AT-rich interactive domain-containing protein 3A (arid3a) from Danio rerio (Zebrafish).